A 168-amino-acid chain; its full sequence is MAYQDEESKEYSEKVVKIDRVAKVVKGGRRFSFNALSVVGDQRGKVGIGFGKANEVPDAIRKSIESAKKHLVKINFKGHTIPHEVIGKFKSARVILKPSTAGTGIIAGASVRSIVEKAGIQDVLTKSWGSSNPVNIVKATLDALEQLETPILAAKKRGISLNKLFGKD.

The 64-residue stretch at 11–74 (YSEKVVKIDR…ESAKKHLVKI (64 aa)) folds into the S5 DRBM domain.

It belongs to the universal ribosomal protein uS5 family. Part of the 30S ribosomal subunit. Contacts proteins S4 and S8.

Its function is as follows. With S4 and S12 plays an important role in translational accuracy. Functionally, located at the back of the 30S subunit body where it stabilizes the conformation of the head with respect to the body. This Leptospira interrogans serogroup Icterohaemorrhagiae serovar copenhageni (strain Fiocruz L1-130) protein is Small ribosomal subunit protein uS5.